The primary structure comprises 667 residues: E3 ubiquitin-protein ligase Midline-1 (667 aa).

The RING-type zinc-finger motif lies at 10 to 60 (CPICLELFEDPLLLPCAHSLCFNCAHRILVSHCATNESVESITAFQCPTCR). Phosphoserine is present on residues S92 and S96. B box-type zinc fingers lie at residues 116–165 (KVLC…IEPI) and 172–212 (GLMC…VAAL). 12 residues coordinate Zn(2+): C119, C122, C134, C137, C142, C145, H150, H159, C175, H178, C198, and H204. Positions 205-264 (RDHQVAALSERYDKLKQNLESNLTNLIKRNTELETLLAKLIQTCQHVEVNASRQEAKLTE) form a coiled coil. A COS domain is found at 320 to 379 (LKENDHARFLQTAKNITERVSMATASSQVLIPEINLNDTFDTFALDFSREKKLLECLDYL). Residues 381–484 (APNPPTIREE…EPGKLKTNSQ (104 aa)) enclose the Fibronectin type-III domain. Residues 471-485 (SRSSEPGKLKTNSQP) show a composition bias toward polar residues. The interval 471–524 (SRSSEPGKLKTNSQPFKLDPKSAHRKLKVSHDNLTVERDESSSKKSHTPERFTS) is disordered. The region spanning 482 to 659 (NSQPFKLDPK…IITGLPIPDH (178 aa)) is the B30.2/SPRY domain. Residues 499-520 (VSHDNLTVERDESSSKKSHTPE) show a composition bias toward basic and acidic residues. At S511 the chain carries Phosphoserine.

Belongs to the TRIM/RBCC family. Homodimer or heterodimer with MID2. Interacts with IGBP1. Interacts with TRIM16. Post-translationally, phosphorylated on serine and threonine residues. As to expression, in the fetus, highest expression found in kidney, followed by brain and lung. Expressed at low levels in fetal liver. In the adult, most abundant in heart, placenta and brain.

The protein resides in the cytoplasm. It localises to the cytoskeleton. Its subcellular location is the spindle. It catalyses the reaction S-ubiquitinyl-[E2 ubiquitin-conjugating enzyme]-L-cysteine + [acceptor protein]-L-lysine = [E2 ubiquitin-conjugating enzyme]-L-cysteine + N(6)-ubiquitinyl-[acceptor protein]-L-lysine.. In terms of biological role, has E3 ubiquitin ligase activity towards IGBP1, promoting its monoubiquitination, which results in deprotection of the catalytic subunit of protein phosphatase PP2A, and its subsequent degradation by polyubiquitination. The chain is E3 ubiquitin-protein ligase Midline-1 (MID1) from Homo sapiens (Human).